The primary structure comprises 387 residues: 3-ketoacyl-CoA thiolase FadA (387 aa).

Catalysis depends on Cys91, which acts as the Acyl-thioester intermediate. Catalysis depends on proton acceptor residues His343 and Cys373.

This sequence belongs to the thiolase-like superfamily. Thiolase family. As to quaternary structure, heterotetramer of two alpha chains (FadB) and two beta chains (FadA).

The protein localises to the cytoplasm. The catalysed reaction is an acyl-CoA + acetyl-CoA = a 3-oxoacyl-CoA + CoA. Its pathway is lipid metabolism; fatty acid beta-oxidation. Functionally, catalyzes the final step of fatty acid oxidation in which acetyl-CoA is released and the CoA ester of a fatty acid two carbons shorter is formed. Involved in the aerobic and anaerobic degradation of long-chain fatty acids. In Escherichia coli (strain K12), this protein is 3-ketoacyl-CoA thiolase FadA (fadA).